Here is a 363-residue protein sequence, read N- to C-terminus: Flagellar P-ring protein (363 aa).

The first 20 residues, 1–20 (MKYRLIVALAMLVLSLPSQA), serve as a signal peptide directing secretion.

The protein belongs to the FlgI family. As to quaternary structure, the basal body constitutes a major portion of the flagellar organelle and consists of four rings (L,P,S, and M) mounted on a central rod.

It localises to the periplasm. Its subcellular location is the bacterial flagellum basal body. Functionally, assembles around the rod to form the L-ring and probably protects the motor/basal body from shearing forces during rotation. The polypeptide is Flagellar P-ring protein (Shewanella sp. (strain ANA-3)).